A 549-amino-acid chain; its full sequence is Glucose-6-phosphate isomerase (549 aa).

Glu353 acts as the Proton donor in catalysis. Residues His384 and Lys510 contribute to the active site. Residues 523–549 (AEPPAAQSDSSTDALVRRYRSERGRTA) are disordered. Basic and acidic residues predominate over residues 537 to 549 (LVRRYRSERGRTA).

Belongs to the GPI family.

The protein resides in the cytoplasm. The catalysed reaction is alpha-D-glucose 6-phosphate = beta-D-fructose 6-phosphate. It functions in the pathway carbohydrate biosynthesis; gluconeogenesis. Its pathway is carbohydrate degradation; glycolysis; D-glyceraldehyde 3-phosphate and glycerone phosphate from D-glucose: step 2/4. In terms of biological role, catalyzes the reversible isomerization of glucose-6-phosphate to fructose-6-phosphate. The polypeptide is Glucose-6-phosphate isomerase (Mycolicibacterium gilvum (strain PYR-GCK) (Mycobacterium gilvum (strain PYR-GCK))).